The primary structure comprises 453 residues: MGSVLGLCSVASWIPCLCGSAPCLLCRCCPSGNNSTVTRLIYALFLLVGVCVACVMLIPGMEEQLNKIPGFCENEKGVVPCNILVGYKAVYRLCFGLAMFYLLLSLLMIKVKSSSDPRAAVHNGFWFFKFATAVAIIIGAFFIPEGTFTTVWFYVGMAGAFCFILIQLVLLIDFAHSWNESWVEKMEEGNSRCWYAALLSATALNYLLSLVAVVLFFVYYTHPASCAENKAFISVNMLLCIGASVMSILPKIQESQPRSGLLQSSVITVYTMYLTWSAMTNEPETNCNPSLLSIIGFNTTRPIPKDGQSVQWWHPQGIIGLVLFLLCVFYSSIRTSNNSQVNKLTLTSDESTLIEDGNGRSDGSLDDGDGIHRAVDNERDGVTYSYSFFHFMLFLASLYIMMTLTNWYRYEPSREMKSQWTAVWVKISSSWIGLVLYVWTLVAPLVLTNRDFD.

Gly-2 is lipidated: N-myristoyl glycine. Topologically, residues 2–39 (GSVLGLCSVASWIPCLCGSAPCLLCRCCPSGNNSTVTR) are cytoplasmic. Residues 40–60 (LIYALFLLVGVCVACVMLIPG) traverse the membrane as a helical segment. Topologically, residues 61–88 (MEEQLNKIPGFCENEKGVVPCNILVGYK) are lumenal. The helical transmembrane segment at 89–109 (AVYRLCFGLAMFYLLLSLLMI) threads the bilayer. Over 110–123 (KVKSSSDPRAAVHN) the chain is Cytoplasmic. A helical transmembrane segment spans residues 124–144 (GFWFFKFATAVAIIIGAFFIP). The Lumenal segment spans residues 145–151 (EGTFTTV). The helical transmembrane segment at 152–172 (WFYVGMAGAFCFILIQLVLLI) threads the bilayer. Topologically, residues 173–197 (DFAHSWNESWVEKMEEGNSRCWYAA) are cytoplasmic. A helical membrane pass occupies residues 198-218 (LLSATALNYLLSLVAVVLFFV). The Lumenal segment spans residues 219-231 (YYTHPASCAENKA). Residues 232–252 (FISVNMLLCIGASVMSILPKI) form a helical membrane-spanning segment. Over 253-259 (QESQPRS) the chain is Cytoplasmic. A helical membrane pass occupies residues 260–280 (GLLQSSVITVYTMYLTWSAMT). The Lumenal portion of the chain corresponds to 281–309 (NEPETNCNPSLLSIIGFNTTRPIPKDGQS). Residues 310 to 330 (VQWWHPQGIIGLVLFLLCVFY) traverse the membrane as a helical segment. Residues 331-387 (SSIRTSNNSQVNKLTLTSDESTLIEDGNGRSDGSLDDGDGIHRAVDNERDGVTYSYS) lie on the Cytoplasmic side of the membrane. Position 351 is a phosphoserine (Ser-351). Thr-352 bears the Phosphothreonine mark. Phosphoserine occurs at positions 361 and 364. Residues 388 to 408 (FFHFMLFLASLYIMMTLTNWY) form a helical membrane-spanning segment. The Lumenal segment spans residues 409–426 (RYEPSREMKSQWTAVWVK). A helical membrane pass occupies residues 427–447 (ISSSWIGLVLYVWTLVAPLVL). The Cytoplasmic segment spans residues 448-453 (TNRDFD).

The protein belongs to the TDE1 family. As to quaternary structure, interacts with SPTLC1. Highly expressed in the neuronal populations such as Purkinje cells in the cerebellum, brainstem and spinal motor neurons, locus coeruleus and raphe nuclei.

The protein resides in the endoplasmic reticulum membrane. Enhances the incorporation of serine into phosphatidylserine and sphingolipids. The protein is Serine incorporator 1 (Serinc1) of Mus musculus (Mouse).